Here is a 2764-residue protein sequence, read N- to C-terminus: Teneurin-2 (2764 aa).

The region spanning 1–375 (MDVKDRRHRS…KPSKYCSWKC (375 aa)) is the Teneurin N-terminal domain. Topologically, residues 1–379 (MDVKDRRHRS…YCSWKCAALS (379 aa)) are cytoplasmic. 2 positions are modified to phosphoserine: serine 90 and serine 124. Residues 111-271 (TGSDADSDTE…HHHSSANSLN (161 aa)) are disordered. Positions 141 to 155 (SSGLSSRENSALTLT) are enriched in polar residues. Threonine 155 is modified (phosphothreonine). Residue serine 157 is modified to Phosphoserine. Residues 159 to 168 (NENKSDDDNG) are compositionally biased toward basic and acidic residues. Residues 174–188 (TSSSSLLPSAQLPSS) are compositionally biased toward low complexity. Residues 202 to 211 (DSNTSHQIMD) are compositionally biased toward polar residues. A compositionally biased stretch (low complexity) spans 229-240 (SGPQQASSSGPP). The helical transmembrane segment at 380–400 (AIAAALLLAILLAYFIAMHLL) threads the bilayer. Residues 401-2764 (GLNWQLQPAD…FLRQNEMGKR (2364 aa)) lie on the Extracellular side of the membrane. Residues asparagine 443 and asparagine 482 are each glycosylated (N-linked (GlcNAc...) asparagine). EGF-like domains lie at 575-603 (DCPR…ADCA), 598-634 (LGAD…AECD), 636-668 (PMNQ…EHCE), 669-701 (EVDC…NCEL), 702-735 (ARVQ…PDCS), 737-765 (VCSV…AACD), 768-796 (VCHP…EHCT), and 798-831 (DGCP…PGCN). 22 cysteine pairs are disulfide-bonded: cysteine 576/cysteine 586, cysteine 580/cysteine 591, cysteine 593/cysteine 602, cysteine 611/cysteine 622, cysteine 624/cysteine 633, cysteine 640/cysteine 651, cysteine 645/cysteine 656, cysteine 658/cysteine 667, cysteine 672/cysteine 683, cysteine 677/cysteine 688, cysteine 690/cysteine 699, cysteine 710/cysteine 723, cysteine 725/cysteine 734, cysteine 738/cysteine 748, cysteine 742/cysteine 753, cysteine 755/cysteine 764, cysteine 769/cysteine 779, cysteine 773/cysteine 784, cysteine 786/cysteine 795, cysteine 800/cysteine 810, cysteine 804/cysteine 819, and cysteine 821/cysteine 830. N-linked (GlcNAc...) asparagine glycosylation is found at asparagine 915, asparagine 938, and asparagine 1257. NHL repeat units lie at residues 1262 to 1306 (LELR…VKSL), 1332 to 1376 (ARCG…NGII), 1391 to 1442 (LSCD…IAGR), 1464 to 1491 (LESA…INRL), and 1520 to 1563 (CYSG…VSKN). One copy of the YD 1 repeat lies at 1573–1592 (YEAASPGEQELYVFNADGIH). Asparagine 1606 carries N-linked (GlcNAc...) asparagine glycosylation. 3 YD repeats span residues 1609–1629 (YSAD…LKIR), 1672–1691 (YDGN…WTTF), and 1692–1714 (YDYD…TSLH). N-linked (GlcNAc...) asparagine glycosylation is found at asparagine 1702, asparagine 1739, asparagine 1763, asparagine 1797, and asparagine 1882. YD repeat units follow at residues 1885–1904 (YFFN…ERTD), 1926–1944 (YLDK…YIFE), 1945–1965 (YDSS…HSMS), 1972–1989 (YIRN…VIFD), 1990–2011 (YSDD…VFYK), 2012–2029 (YGKL…TAVT), 2032–2052 (YDET…FSCT), 2055–2075 (YRKV…EGMI), 2083–2103 (YHDN…TPLP), 2109–2126 (YDEI…GVIY), 2127–2153 (YDIN…IKEV), 2155–2168 (YEMF…MTVQ), 2169–2192 (YDSM…TKYT), 2195–2215 (YDGD…WRYS), 2216–2236 (YDLN…LMPL), 2238–2258 (YDLR…DDDG), 2270–2290 (YNSK…SVQY), and 2292–2312 (YDGV…LQYF). Asparagine 1983 is a glycosylation site (N-linked (GlcNAc...) asparagine). Residue asparagine 2187 is glycosylated (N-linked (GlcNAc...) asparagine). Residue asparagine 2327 is glycosylated (N-linked (GlcNAc...) asparagine). The stretch at 2338–2379 (YDLQGHLFAMESSSGEEYYVASDNTGTPLAVYSINGLMIKQL) is one YD 23 repeat. N-linked (GlcNAc...) asparagine glycosylation is present at asparagine 2638.

Belongs to the tenascin family. Teneurin subfamily. In terms of assembly, homodimer; disulfide-linked. Heterodimer with either TENM1 or TENM3. May also form heterodimer with TENM4. Post-translationally, derives from the membrane form by proteolytic processing. In terms of processing, derives from the plasma membrane form by proteolytic cleavage and translocates to the nucleus. Homophilic binding of the C-terminal extracellular domain stimulates its proteolytic cleavage and release in the cytoplasmic. Is subjected to rapid degradation by the proteasome pathway. As to expression, expressed in the cortex, CA1, CA2, CA3, dentate gyrus and granular layer of the hippocampus. Expressed in the Purkinje cells and molecular layer of the cerebellum.

It is found in the cell membrane. The protein resides in the presynaptic cell membrane. It localises to the postsynaptic cell membrane. The protein localises to the endoplasmic reticulum. Its subcellular location is the golgi apparatus. It is found in the synapse. The protein resides in the cell projection. It localises to the dendritic spine. The protein localises to the filopodium. Its subcellular location is the growth cone. It is found in the nucleus. The protein resides in the PML body. Its function is as follows. Involved in neural development, regulating the establishment of proper connectivity within the nervous system. Acts as a ligand of the ADGRL1 and ADGRL3 receptors that are expressed at the surface of adjacent cells. Promotes the formation of filopodia and enlarged growth cone in neuronal cells. Mediates axon guidance and homophilic and heterophilic cell-cell adhesion. May function as a cellular signal transducer. Induces gene transcription inhibition. This Mus musculus (Mouse) protein is Teneurin-2 (Tenm2).